We begin with the raw amino-acid sequence, 416 residues long: Adenylosuccinate synthetase (416 aa).

GTP-binding positions include 12–18 (GDEGKGK) and 40–42 (GHT). Aspartate 13 acts as the Proton acceptor in catalysis. Mg(2+)-binding residues include aspartate 13 and glycine 40. Residues 13–16 (DEGK), 38–41 (NAGH), threonine 125, arginine 139, glutamine 219, threonine 234, and arginine 298 contribute to the IMP site. Residue histidine 41 is the Proton donor of the active site. 294-300 (TVTGRKR) is a binding site for substrate. Residues arginine 300, 326 to 328 (KLD), and 404 to 406 (STS) each bind GTP.

This sequence belongs to the adenylosuccinate synthetase family. In terms of assembly, homodimer. Mg(2+) serves as cofactor.

The protein resides in the cytoplasm. It carries out the reaction IMP + L-aspartate + GTP = N(6)-(1,2-dicarboxyethyl)-AMP + GDP + phosphate + 2 H(+). The protein operates within purine metabolism; AMP biosynthesis via de novo pathway; AMP from IMP: step 1/2. Plays an important role in the de novo pathway of purine nucleotide biosynthesis. Catalyzes the first committed step in the biosynthesis of AMP from IMP. The sequence is that of Adenylosuccinate synthetase from Aliarcobacter butzleri (strain RM4018) (Arcobacter butzleri).